Here is a 348-residue protein sequence, read N- to C-terminus: MTHSRFLAACRRQPVDATPVWFMRQAGRYMPEYRAIRERYGFLEMVKTPELAAEITMQPIRAFSVDAAIIFADILPLLEGMGLHLTYEQGEGPVIHNPVRSPADVAALRTPDPRETVAYTIQAIRLVKRDLEGRAPLIGFSGAPFTLAAYAIEGGSSRDHRLTKALMYAEPQAWRELMERLTAQVSAYLIAQIEAGADAVQIFDSWAGALAPGDYADYVLPFVQKCIIAVRAGCGIVPPPPIIYFGVGLSGMLGLLRQTDADVIGLDWRIHLDDGWAQVGPGVAVQGNLDPHTLLAPWTEVRRRTADILDRAAGRPGHIFNLGHGIVPETPVDTVRRLAEFVHEYSAE.

Substrate-binding positions include 24 to 28 (RQAGR), Asp73, Tyr150, Ser205, and His324.

Belongs to the uroporphyrinogen decarboxylase family. As to quaternary structure, homodimer.

It is found in the cytoplasm. It carries out the reaction uroporphyrinogen III + 4 H(+) = coproporphyrinogen III + 4 CO2. It participates in porphyrin-containing compound metabolism; protoporphyrin-IX biosynthesis; coproporphyrinogen-III from 5-aminolevulinate: step 4/4. Its function is as follows. Catalyzes the decarboxylation of four acetate groups of uroporphyrinogen-III to yield coproporphyrinogen-III. The chain is Uroporphyrinogen decarboxylase from Roseiflexus sp. (strain RS-1).